The sequence spans 450 residues: Ribosomal protein uS12 methylthiotransferase RimO (450 aa).

The region spanning 9–124 (NRINVVTLGC…LLSALEADYK (116 aa)) is the MTTase N-terminal domain. Residues Cys18, Cys53, Cys87, Cys148, Cys152, and Cys155 each contribute to the [4Fe-4S] cluster site. The Radical SAM core domain occupies 134–365 (TTPKNYAYLK…EIQSQISWEL (232 aa)). One can recognise a TRAM domain in the interval 367-434 (QQKIGEVFNV…DFDLYGEPLN (68 aa)).

The protein belongs to the methylthiotransferase family. RimO subfamily. The cofactor is [4Fe-4S] cluster.

It localises to the cytoplasm. The catalysed reaction is L-aspartate(89)-[ribosomal protein uS12]-hydrogen + (sulfur carrier)-SH + AH2 + 2 S-adenosyl-L-methionine = 3-methylsulfanyl-L-aspartate(89)-[ribosomal protein uS12]-hydrogen + (sulfur carrier)-H + 5'-deoxyadenosine + L-methionine + A + S-adenosyl-L-homocysteine + 2 H(+). In terms of biological role, catalyzes the methylthiolation of an aspartic acid residue of ribosomal protein uS12. The polypeptide is Ribosomal protein uS12 methylthiotransferase RimO (Christiangramia forsetii (strain DSM 17595 / CGMCC 1.15422 / KT0803) (Gramella forsetii)).